The chain runs to 375 residues: Nicotinate-nucleotide--dimethylbenzimidazole phosphoribosyltransferase (375 aa).

The active-site Proton acceptor is the E323. The segment at 344–375 is disordered; sequence LPEKPEELEAGEGPEAAEESSPEPENPEALAE. Residues 351 to 375 show a composition bias toward acidic residues; sequence LEAGEGPEAAEESSPEPENPEALAE.

It belongs to the CobT family.

It carries out the reaction 5,6-dimethylbenzimidazole + nicotinate beta-D-ribonucleotide = alpha-ribazole 5'-phosphate + nicotinate + H(+). The protein operates within nucleoside biosynthesis; alpha-ribazole biosynthesis; alpha-ribazole from 5,6-dimethylbenzimidazole: step 1/2. In terms of biological role, catalyzes the synthesis of alpha-ribazole-5'-phosphate from nicotinate mononucleotide (NAMN) and 5,6-dimethylbenzimidazole (DMB). This chain is Nicotinate-nucleotide--dimethylbenzimidazole phosphoribosyltransferase, found in Streptomyces avermitilis (strain ATCC 31267 / DSM 46492 / JCM 5070 / NBRC 14893 / NCIMB 12804 / NRRL 8165 / MA-4680).